Consider the following 583-residue polypeptide: DNA ligase (583 aa).

Glutamate 249 is a binding site for ATP. The active-site N6-AMP-lysine intermediate is the lysine 251. ATP-binding residues include arginine 256, arginine 271, glutamate 301, phenylalanine 341, arginine 416, and lysine 422.

The protein belongs to the ATP-dependent DNA ligase family. Requires Mg(2+) as cofactor.

The catalysed reaction is ATP + (deoxyribonucleotide)n-3'-hydroxyl + 5'-phospho-(deoxyribonucleotide)m = (deoxyribonucleotide)n+m + AMP + diphosphate.. DNA ligase that seals nicks in double-stranded DNA during DNA replication, DNA recombination and DNA repair. The protein is DNA ligase of Pyrobaculum calidifontis (strain DSM 21063 / JCM 11548 / VA1).